The primary structure comprises 514 residues: Antiseptic resistance protein (514 aa).

Over 1–23 (MISFFTKTTDMMTSKKRWTALVV) the chain is Cytoplasmic. A helical membrane pass occupies residues 24–41 (LAVSLFVVTMDMTILIMA). The Extracellular segment spans residues 42 to 57 (LPELVRELEPSGTQQL). The helical transmembrane segment at 58-75 (WIVDIYSLVLAGFIIPLS) threads the bilayer. Topologically, residues 76–86 (AFADKWGRKKA) are cytoplasmic. Residues 87–104 (LLTGFALFGLVSLAIFFA) traverse the membrane as a helical segment. The Extracellular segment spans residues 105-112 (ESAEFVIA). The helical transmembrane segment at 113-130 (IRFLLGIAGALIMPTTLS) threads the bilayer. The Cytoplasmic portion of the chain corresponds to 131 to 146 (MIRVIFENPKERATAL). The chain crosses the membrane as a helical span at residues 147–164 (AVWSIASSIGAVFGPIIG). The Extracellular portion of the chain corresponds to 165 to 172 (GALLEQFS). A helical transmembrane segment spans residues 173-190 (WHSAFLINVPFAIIAVVA). The Cytoplasmic portion of the chain corresponds to 191 to 207 (GLFLLPESKLSKEKSHS). A helical membrane pass occupies residues 208 to 225 (WDIPSTILSIAGMIGLVW). The Extracellular segment spans residues 226–237 (SIKEFSKEGLAD). A helical transmembrane segment spans residues 238–255 (IIPWVVIVLAITMIVIFV). Residues 256-278 (KRNLSSSDPMLDVRLFKKRSFSA) are Cytoplasmic-facing. The chain crosses the membrane as a helical span at residues 279–295 (GTIAAFMTMFAMASVLL). Residues 296–315 (LASQWLQVVEELSPFKAGLY) are Extracellular-facing. A helical transmembrane segment spans residues 316–333 (LLPMAIGDMVFAPIAPGL). Over 334–341 (AARFGPKI) the chain is Cytoplasmic. Residues 342–360 (VLPSGIGIAAIGMFIMYFF) traverse the membrane as a helical segment. The Extracellular portion of the chain corresponds to 361–369 (GHPLSYSTM). A helical transmembrane segment spans residues 370–387 (ALALILVGAGMASLAVAS). The Cytoplasmic portion of the chain corresponds to 388-408 (ALIMLETPTSKAGNAAAVEES). The chain crosses the membrane as a helical span at residues 409–426 (MYDLGNVFGVAVLGSLSS). Residues 427 to 481 (MLYRVFLDISSFSSKGIVGDLAHVAEESVVGAVEVAKATGIKQLANEAVTSFNDA) lie on the Extracellular side of the membrane. Residues 482 to 499 (FVATALVGGIIMIIISIV) form a helical membrane-spanning segment. The Cytoplasmic portion of the chain corresponds to 500 to 514 (VYLLIPKSLDITKQK).

It belongs to the major facilitator superfamily.

Its subcellular location is the cell membrane. Its function is as follows. Confers export-mediated resistance against antiseptic and disinfectant compounds such as intercalating dyes, quaternary ammonium salts and diamidines. This chain is Antiseptic resistance protein (qacA), found in Staphylococcus aureus (strain Mu50 / ATCC 700699).